A 419-amino-acid polypeptide reads, in one-letter code: Serine hydroxymethyltransferase (419 aa).

Residues leucine 121 and 125 to 127 (GHL) contribute to the (6S)-5,6,7,8-tetrahydrofolate site. The residue at position 231 (lysine 231) is an N6-(pyridoxal phosphate)lysine.

It belongs to the SHMT family. Homodimer. Requires pyridoxal 5'-phosphate as cofactor.

It localises to the cytoplasm. It carries out the reaction (6R)-5,10-methylene-5,6,7,8-tetrahydrofolate + glycine + H2O = (6S)-5,6,7,8-tetrahydrofolate + L-serine. It functions in the pathway one-carbon metabolism; tetrahydrofolate interconversion. Its pathway is amino-acid biosynthesis; glycine biosynthesis; glycine from L-serine: step 1/1. Catalyzes the reversible interconversion of serine and glycine with tetrahydrofolate (THF) serving as the one-carbon carrier. This reaction serves as the major source of one-carbon groups required for the biosynthesis of purines, thymidylate, methionine, and other important biomolecules. Also exhibits THF-independent aldolase activity toward beta-hydroxyamino acids, producing glycine and aldehydes, via a retro-aldol mechanism. This chain is Serine hydroxymethyltransferase, found in Phytoplasma mali (strain AT).